We begin with the raw amino-acid sequence, 81 residues long: Protein Vpu (81 aa).

Over 1–7 (MQPLQIL) the chain is Extracellular. The helical transmembrane segment at 8–28 (SIVALVVAAIIAIVVWSIVFI) threads the bilayer. The Cytoplasmic segment spans residues 29–81 (LIRKILRQRKIDRLIDRIRERAEDSGNESEGIRKELSALVEMGHDAPGDIDDL). Phosphoserine; by host CK2 is present on residues Ser-53 and Ser-57.

It belongs to the HIV-1 VPU protein family. Homopentamer. Interacts with host CD4 and BRTC; these interactions induce proteasomal degradation of CD4. Interacts with host BST2; this interaction leads to the degradation of host BST2. Interacts with host FBXW11. Interacts with host AP1M1; this interaction plays a role in the mistrafficking and subsequent degradation of host BST2. Interacts with host RANBP2; this interaction allows Vpu to down-regulate host BLM sumoylation. Post-translationally, phosphorylated by host CK2. This phosphorylation is necessary for interaction with human BTRC and degradation of CD4.

The protein localises to the host membrane. Ion channel activity is inhibited by hexamethylene amiloride in vitro. In terms of biological role, enhances virion budding by targeting host CD4 and Tetherin/BST2 to proteasome degradation. Degradation of CD4 prevents any unwanted premature interactions between viral Env and its host receptor CD4 in the endoplasmic reticulum. Degradation of antiretroviral protein Tetherin/BST2 is important for virion budding, as BST2 tethers new viral particles to the host cell membrane. Mechanistically, Vpu bridges either CD4 or BST2 to BTRC, a substrate recognition subunit of the Skp1/Cullin/F-box protein E3 ubiquitin ligase, induces their ubiquitination and subsequent proteasomal degradation. The alteration of the E3 ligase specificity by Vpu seems to promote the degradation of host IKBKB, leading to NF-kappa-B down-regulation and subsequent apoptosis. Acts as a viroporin that forms an oligomeric ion channel in membranes. Modulates the host DNA repair mechanisms to promote degradation of nuclear viral cDNA in cells that are already productively infected in order to suppress immune sensing and proviral hyper-integration (superinfection). Manipulates PML-NBs and modulates SUMOylation of host BLM protein thereby enhancing its DNA-end processing activity toward viral unintegrated linear DNA. Also inhibits RAD52-mediated homologous repair of viral cDNA, preventing the generation of dead-end circular forms of single copies of the long terminal repeat and permitting sustained nucleolytic attack. This chain is Protein Vpu, found in Homo sapiens (Human).